The chain runs to 265 residues: Seminal vesicle secretory protein 3A (265 aa).

A signal peptide spans Met-1–Gly-20. A run of 5 repeats spans residues Gln-116–Ser-119, Gln-122–Ser-125, Gln-129–Ser-132, Gln-136–Thr-139, and Gln-142–Ser-145. Residues Gln-116–Ser-145 form a 5 X 4 AA tandem repeats of Q-X-K-[ST] region.

Glycosylated. Post-translationally, covalently cross-linked by transglutaminase, which is important for the formation of the gelatinous copulatory plug. Five repeats of Q-X-K-(S/T) in the central region of the protein serve as the transglutaminase substrate site(s). As to expression, highly expressed in the seminal vesicle where it is detected in luminal epithelium of the mucosa folds, and also in luminal fluid (at protein level). Not detected in other tissues tested.

It localises to the secreted. Functionally, component of the copulatory plug. The protein is Seminal vesicle secretory protein 3A of Mus musculus (Mouse).